Consider the following 179-residue polypeptide: Endoribonuclease YbeY (179 aa).

Residues His-148, His-152, and His-158 each coordinate Zn(2+).

This sequence belongs to the endoribonuclease YbeY family. Requires Zn(2+) as cofactor.

It localises to the cytoplasm. In terms of biological role, single strand-specific metallo-endoribonuclease involved in late-stage 70S ribosome quality control and in maturation of the 3' terminus of the 16S rRNA. This Prochlorococcus marinus (strain MIT 9215) protein is Endoribonuclease YbeY.